The primary structure comprises 252 residues: 5'-nucleotidase SurE (252 aa).

Asp8, Asp9, Ser42, and Asn94 together coordinate a divalent metal cation.

Belongs to the SurE nucleotidase family. A divalent metal cation is required as a cofactor.

The protein resides in the cytoplasm. It carries out the reaction a ribonucleoside 5'-phosphate + H2O = a ribonucleoside + phosphate. In terms of biological role, nucleotidase that shows phosphatase activity on nucleoside 5'-monophosphates. This chain is 5'-nucleotidase SurE, found in Ehrlichia ruminantium (strain Welgevonden).